Here is a 126-residue protein sequence, read N- to C-terminus: Topoisomerase I damage affected protein 2 (126 aa).

The residue at position 2 (Ser-2) is an N-acetylserine.

It belongs to the TDA2 family.

Its subcellular location is the cytoplasm. The protein localises to the cell projection. The chain is Topoisomerase I damage affected protein 2 (TDA2) from Saccharomyces cerevisiae (strain JAY291) (Baker's yeast).